Here is a 178-residue protein sequence, read N- to C-terminus: Large ribosomal subunit protein uL6 (178 aa).

This sequence belongs to the universal ribosomal protein uL6 family. As to quaternary structure, part of the 50S ribosomal subunit.

In terms of biological role, this protein binds to the 23S rRNA, and is important in its secondary structure. It is located near the subunit interface in the base of the L7/L12 stalk, and near the tRNA binding site of the peptidyltransferase center. The sequence is that of Large ribosomal subunit protein uL6 from Streptococcus mutans serotype c (strain ATCC 700610 / UA159).